Here is an 86-residue protein sequence, read N- to C-terminus: Mitochondrial import inner membrane translocase subunit Tim10 (86 aa).

A Twin CX3C motif motif is present at residues 29-54 (CQAKCIATAFRESELTKGEAVCLDRC). 2 cysteine pairs are disulfide-bonded: Cys29–Cys54 and Cys33–Cys50.

The protein belongs to the small Tim family. Heterohexamer; composed of 3 copies of tim-9/tin-9.1 and 3 copies of tim-10/tin-10, named soluble 70 kDa complex. The complex associates with the tim-22 component of the TIM22 complex. Interacts with multi-pass transmembrane proteins in transit.

The protein resides in the mitochondrion inner membrane. Mitochondrial intermembrane chaperone that participates in the import and insertion of multi-pass transmembrane proteins into the mitochondrial inner membrane. May also be required for the transfer of beta-barrel precursors from the TOM complex to the sorting and assembly machinery (SAM complex) of the outer membrane. Acts as a chaperone-like protein that protects the hydrophobic precursors from aggregation and guide them through the mitochondrial intermembrane space. The polypeptide is Mitochondrial import inner membrane translocase subunit Tim10 (tin-10) (Caenorhabditis elegans).